A 221-amino-acid polypeptide reads, in one-letter code: NEDD4 family-interacting protein 1 (221 aa).

At Ala2 the chain carries N-acetylalanine. The interval 2 to 41 is interaction with UBE2L3; the sequence is ALALAALAAVEPACGSRYQQLQNEEESGEPEQAAGDAPPP. At 2–116 the chain is on the cytoplasmic side; that stretch reads ALALAALAAV…ADQLRIGNDG (115 aa). Residues 18–45 are disordered; the sequence is RYQQLQNEEESGEPEQAAGDAPPPYSSI. 3 consecutive short sequence motifs (PPxY motif) follow at residues 39-42, 64-67, and 74-76; these read PPPY, PPSY, and PSY. The tract at residues 42–76 is interaction with ITCH; the sequence is YSSISAESAAYFDYKDESGFPKPPSYNVATTLPSY. The helical transmembrane segment at 117–137 threads the bilayer; the sequence is IFMLTFFMAFLFNWIGFFLSF. Topologically, residues 138–143 are extracellular; sequence CLTTSA. A helical membrane pass occupies residues 144-164; it reads AGRYGAISGFGLSLIKWILIV. Topologically, residues 165–172 are cytoplasmic; it reads RFSTYFPG. A helical membrane pass occupies residues 173-193; it reads YFDGQYWLWWVFLVLGFLLFL. Topologically, residues 194-221 are extracellular; that stretch reads RGFINYAKVRKMPETFSNLPRTRVLFIY.

Forms heterodimers with NDFIP2. Interacts with several E3 ubiquitin-protein ligases, including ITCH, NEDD4, NEDD4L and WWP2. The interaction with NEDD4, NEDD4L and ITCH leads to relocalization of these proteins to exosomes and eventually to exosomal secretion. Interacts with U2SURP. Interacts with SLC11A2/DMT1. Interacts with PTEN. May interact with phosphorylated EGFR. Interacts with BRAT1. Interacts with KCNH2. Interacts with MAVS. Part of a complex containing ITCH, NDFIP1 and MAP3K7. Interacts (via N-terminus) with UBE2L3; the interaction mediates recruitment of UBE2L3 to ITCH. Post-translationally, ubiquitinated by NEDD4 and ITCH; mono-, di- and polyubiquitinated forms are detected. Ubiquitination regulates its degradation. In terms of processing, undergoes transient tyrosine phosphorylation following EGF stimulation, most probably by catalyzed by SRC. Phosphorylation SRC is enhanced in the presence of NDFIP2 which may act as a scaffold to recruit SRC to NDFIP1. Widely expressed. Higher levels are detected in cerebellum, pituitary, thalamus, kidney, liver, testis, salivary glands and placenta. Also expressed in fetal brain, kidney and lung.

The protein localises to the endosome membrane. Its subcellular location is the golgi apparatus membrane. It localises to the synapse. It is found in the synaptosome. The protein resides in the cell projection. The protein localises to the dendrite. Its subcellular location is the secreted. In terms of biological role, activates HECT domain-containing E3 ubiquitin-protein ligases, including NEDD4 and ITCH, and consequently modulates the stability of their targets. As a result, controls many cellular processes. Prevents chronic T-helper cell-mediated inflammation by activating ITCH and thus controlling JUNB degradation. Promotes pancreatic beta cell death through degradation of JUNB and inhibition of the unfolded protein response, leading to reduction of insulin secretion. Restricts the production of pro-inflammatory cytokines in effector Th17 T-cells by promoting ITCH-mediated ubiquitination and degradation of RORC. Together with NDFIP2, limits the cytokine signaling and expansion of effector Th2 T-cells by promoting degradation of JAK1, probably by ITCH- and NEDD4L-mediated ubiquitination. Regulates peripheral T-cell tolerance to self and foreign antigens, forcing the exit of naive CD4+ T-cells from the cell cycle before they become effector T-cells. Negatively regulates RLR-mediated antiviral response by promoting SMURF1-mediated ubiquitination and subsequent degradation of MAVS. Negatively regulates KCNH2 potassium channel activity by decreasing its cell-surface expression and interfering with channel maturation through recruitment of NEDD4L to the Golgi apparatus where it mediates KCNH2 degradation. In cortical neurons, mediates the ubiquitination of the divalent metal transporter SLC11A2/DMT1 by NEDD4L, leading to its down-regulation and protection of the cells from cobalt and iron toxicity. Important for normal development of dendrites and dendritic spines in cortex. Enhances the ubiquitination of BRAT1 mediated by: NEDD4, NEDD4L and ITCH and is required for the nuclear localization of ubiquitinated BRAT1. Enhances the ITCH-mediated ubiquitination of MAP3K7 by recruiting E2 ubiquitin-conjugating enzyme UBE2L3 to ITCH. Modulates EGFR signaling through multiple pathways. In particular, may regulate the ratio of AKT1-to-MAPK8 signaling in response to EGF, acting on AKT1 probably through PTEN destabilization and on MAPK8 through ITCH-dependent MAP2K4 inactivation. As a result, may control cell growth rate. Inhibits cell proliferation by promoting PTEN nuclear localization and changing its signaling specificity. The protein is NEDD4 family-interacting protein 1 (NDFIP1) of Homo sapiens (Human).